Reading from the N-terminus, the 367-residue chain is Adenosine deaminase (367 aa).

2 residues coordinate Zn(2+): His-46 and His-48. Residues 48 to 50 (HLD), Asp-176, and Gly-205 contribute to the a purine D-ribonucleoside site. A gating helix loop; regulates binding affinity for substrates and thus substrate selectivity region spans residues 174 to 188 (TGDGGLSHERMKEAA). His-230 lines the Zn(2+) pocket. A purine D-ribonucleoside-binding residues include Glu-233, His-257, and Asp-314. Asp-314 is a Zn(2+) binding site.

Belongs to the metallo-dependent hydrolases superfamily. Adenosine and AMP deaminases family. The cofactor is Zn(2+).

The catalysed reaction is adenosine + H2O + H(+) = inosine + NH4(+). It catalyses the reaction S-methyl-5'-thioadenosine + H2O + H(+) = S-methyl-5'-thioinosine + NH4(+). It participates in purine metabolism; purine nucleoside salvage. Its activity is regulated as follows. Inhibited by coformycin and methylthiocoformycin (MT-coformycin). Catalyzes the hydrolytic deamination of adenosine to produce inosine. Unlike mammalian adenosine deaminases, also catalyzes the deamination of 5'-methylthioadenosine (MTA), a by-product of polyamine biosynthesis, to produce 5'-methylthioinosine (MTI). Plays an essential role in the purine salvage pathway which allows the parasite to use host cell purines for the synthesis of nucleic acids. This is Adenosine deaminase from Plasmodium falciparum (isolate 3D7).